Here is a 135-residue protein sequence, read N- to C-terminus: ATP synthase epsilon chain (135 aa).

Residues 90-103 (DVRRAESAKERAES) are compositionally biased toward basic and acidic residues. Residues 90–115 (DVRRAESAKERAESHLNNNDEDTDIN) form a disordered region.

It belongs to the ATPase epsilon chain family. In terms of assembly, F-type ATPases have 2 components, CF(1) - the catalytic core - and CF(0) - the membrane proton channel. CF(1) has five subunits: alpha(3), beta(3), gamma(1), delta(1), epsilon(1). CF(0) has three main subunits: a, b and c.

It localises to the cell membrane. Produces ATP from ADP in the presence of a proton gradient across the membrane. This Staphylococcus carnosus (strain TM300) protein is ATP synthase epsilon chain.